We begin with the raw amino-acid sequence, 181 residues long: ATP synthase subunit delta (181 aa).

Belongs to the ATPase delta chain family. In terms of assembly, F-type ATPases have 2 components, F(1) - the catalytic core - and F(0) - the membrane proton channel. F(1) has five subunits: alpha(3), beta(3), gamma(1), delta(1), epsilon(1). F(0) has three main subunits: a(1), b(2) and c(10-14). The alpha and beta chains form an alternating ring which encloses part of the gamma chain. F(1) is attached to F(0) by a central stalk formed by the gamma and epsilon chains, while a peripheral stalk is formed by the delta and b chains.

It localises to the cell inner membrane. In terms of biological role, f(1)F(0) ATP synthase produces ATP from ADP in the presence of a proton or sodium gradient. F-type ATPases consist of two structural domains, F(1) containing the extramembraneous catalytic core and F(0) containing the membrane proton channel, linked together by a central stalk and a peripheral stalk. During catalysis, ATP synthesis in the catalytic domain of F(1) is coupled via a rotary mechanism of the central stalk subunits to proton translocation. Its function is as follows. This protein is part of the stalk that links CF(0) to CF(1). It either transmits conformational changes from CF(0) to CF(1) or is implicated in proton conduction. This chain is ATP synthase subunit delta, found in Aquifex aeolicus (strain VF5).